Consider the following 732-residue polypeptide: B-cadherin (732 aa).

The propeptide occupies 1 to 6 (LRRQKR). 5 Cadherin domains span residues 6–114 (RDWV…KPQF), 115–227 (TQEV…APEF), 228–339 (DPKT…APVF), 340–443 (DPPL…VNDH), and 444–554 (GPEP…RVDT). Residues 6 to 554 (RDWVIPPIKV…SCAQKPRVDT (549 aa)) lie on the Extracellular side of the membrane. An N-linked (GlcNAc...) asparagine glycan is attached at Asn-137. Asn-410 carries an N-linked (GlcNAc...) asparagine glycan. The chain crosses the membrane as a helical span at residues 555 to 580 (GVPIVLAVLGAVLALLLVLLLLLLLV). The Cytoplasmic portion of the chain corresponds to 581–732 (RRRKVVKEPL…ELYGGGEDEE (152 aa)).

In terms of tissue distribution, expressed in a wide variety of tissues.

Its subcellular location is the cell membrane. Cadherins are calcium-dependent cell adhesion proteins. They preferentially interact with themselves in a homophilic manner in connecting cells; cadherins may thus contribute to the sorting of heterogeneous cell types. B-cadherin may have important functions in neurogenesis, in at least some epithelia, and in embryogenesis. This chain is B-cadherin (K-CAM), found in Gallus gallus (Chicken).